Here is a 2063-residue protein sequence, read N- to C-terminus: Rho guanine nucleotide exchange factor 17 (2063 aa).

Disordered stretches follow at residues 22-365 (WSGG…MSDS), 380-466 (YLAS…SNPD), 485-581 (LRVR…AEED), and 602-958 (IQRM…RHVR). The span at 65-76 (PLAAPAQPRPLR) shows a compositional bias: low complexity. Residues 87–96 (RRFDAPRLDD) show a composition bias toward basic and acidic residues. The segment covering 108 to 122 (PAAAEEAAEGPARGA) has biased composition (low complexity). Phosphoserine is present on residues Ser-142 and Ser-152. Positions 225–250 (AGARASCSSSSIAASYPVSRSRAASS) are enriched in low complexity. Ser-310 carries the phosphoserine modification. Positions 313 to 323 (LNLSSMNSAGV) are enriched in polar residues. Residues Ser-326, Ser-332, Ser-383, Ser-387, Ser-395, Ser-410, and Ser-420 each carry the phosphoserine modification. The segment covering 388 to 397 (RGSSRYSSTE) has biased composition (polar residues). Over residues 445 to 456 (ALRDGGFEPEKS) the composition is skewed to basic and acidic residues. Residues Ser-461 and Ser-546 each carry the phosphoserine modification. Positions 562 to 573 (SALKSSSSELLL) are enriched in low complexity. Ser-619 is subject to Phosphoserine. Polar residues predominate over residues 671 to 680 (LSSSSAQTNH). Ser-696 bears the Phosphoserine mark. Phosphothreonine is present on residues Thr-699 and Thr-702. Phosphoserine is present on Ser-735. Polar residues predominate over residues 754–765 (SVDSNLLGSLSP). Residues 827–836 (SLSDPSRRGE) are compositionally biased toward basic and acidic residues. Ser-914 carries the post-translational modification Phosphoserine. Residues 917 to 928 (LIRRGSKKRPAR) show a composition bias toward basic residues. Over residues 930-939 (SHQELRRDEG) the composition is skewed to basic and acidic residues. Phosphoserine is present on residues Ser-961 and Ser-1002. A disordered region spans residues 1034-1060 (APPSAEAKPPEAARPADEPTPASKCCS). Residues 1041-1050 (KPPEAARPAD) show a composition bias toward basic and acidic residues. The 189-residue stretch at 1066–1254 (MRKHVAMTLL…KQVAERINKG (189 aa)) folds into the DH domain. Ser-1331 bears the Phosphoserine mark. Disordered stretches follow at residues 1564–1584 (HREP…PAGP), 1616–1719 (GLEM…SSHG), 1991–2020 (TPPP…PAPA), and 2036–2055 (FRLS…DDST). Residues 1568-1582 (PPSLRSPPETAPEPA) are compositionally biased toward pro residues. Positions 1644 to 1680 (SPSPSGTLQSQASRSTISSSFGNEETPSSKEATAETT) are enriched in low complexity. The span at 2004–2013 (PSLEHRDSPW) shows a compositional bias: basic and acidic residues.

As to expression, highly expressed in the heart.

Acts as a guanine nucleotide exchange factor (GEF) for RhoA GTPases. This chain is Rho guanine nucleotide exchange factor 17 (ARHGEF17), found in Homo sapiens (Human).